The primary structure comprises 123 residues: Keratin-associated protein 2-2 (123 aa).

Positions 5–112 are 11 X 5 AA repeats of C-C-[CDPQRWG]-[APRS]-[CIPSTVD]; that stretch reads CCGSTFSSLS…SVQSPCGQPT (108 aa).

The protein belongs to the KRTAP type 2 family. As to quaternary structure, interacts with hair keratins.

In terms of biological role, in the hair cortex, hair keratin intermediate filaments are embedded in an interfilamentous matrix, consisting of hair keratin-associated proteins (KRTAP), which are essential for the formation of a rigid and resistant hair shaft through their extensive disulfide bond cross-linking with abundant cysteine residues of hair keratins. The matrix proteins include the high-sulfur and high-glycine-tyrosine keratins. In Homo sapiens (Human), this protein is Keratin-associated protein 2-2 (KRTAP2-2).